Here is a 170-residue protein sequence, read N- to C-terminus: Flavodoxin (170 aa).

The Flavodoxin-like domain maps to 5-165; sequence IGLFYGTQTG…RIKSWVAQLK (161 aa).

Belongs to the flavodoxin family. FMN serves as cofactor.

Its function is as follows. Low-potential electron donor to a number of redox enzymes. The sequence is that of Flavodoxin (isiB) from Nostoc sp. (strain PCC 7120 / SAG 25.82 / UTEX 2576).